The sequence spans 388 residues: (S)-8-oxocitronellyl enol synthase ISY1 (388 aa).

NADP(+) contacts are provided by residues 35–37 (TGI), 63–64 (RR), 81–82 (DV), 105–106 (TW), and Q143. Residues K147 and Y178 contribute to the active site. Residues Y178, I205, and 212 to 214 (SMM) each bind NADP(+).

Belongs to the short-chain dehydrogenases/reductases (SDR) family.

The catalysed reaction is (S)-8-oxocitronellyl enol + NADP(+) = (6E)-8-oxogeranial + NADPH + H(+). It carries out the reaction (S)-8-oxocitronellyl enol + NAD(+) = (6E)-8-oxogeranial + NADH + H(+). Iridoid synthase that catalyzes the first step in generation of the iridoid ring scaffold using the linear monoterpene (6E)-8-oxogeranial as substrate. Iridoids comprise a large family of distinctive bicyclic monoterpenes that possess a wide range of pharmacological activities, including anticancer, anti-inflammatory, antifungal and antibacterial activities. Catalyzes the conversion of the linear monoterpene (6E)-8-oxogeranial to (S)-8-oxocitronellyl enol, a precursor of nepetalactones, which are metabolites that are both insect-repellent and have euphoric effect in cats. The polypeptide is (S)-8-oxocitronellyl enol synthase ISY1 (Nepeta racemosa (Catmint)).